Reading from the N-terminus, the 217-residue chain is Pyrophosphatase PpaX (217 aa).

The active-site Nucleophile is the D11.

It belongs to the HAD-like hydrolase superfamily. PpaX family. Mg(2+) is required as a cofactor.

It catalyses the reaction diphosphate + H2O = 2 phosphate + H(+). Its function is as follows. Hydrolyzes pyrophosphate formed during P-Ser-HPr dephosphorylation by HPrK/P. Might play a role in controlling the intracellular pyrophosphate pool. This is Pyrophosphatase PpaX from Listeria innocua serovar 6a (strain ATCC BAA-680 / CLIP 11262).